The sequence spans 440 residues: Protein OSB3, chloroplastic/mitochondrial (440 aa).

Residues 1-61 (MNLISRTLTR…AKVSVKPPLN (61 aa)) constitute a chloroplast and mitochondrion transit peptide. The 99-residue stretch at 80-178 (ISNWINLIGF…VMVQNLNFVQ (99 aa)) folds into the SSB domain. PDF region stretches follow at residues 218–270 (WKHL…LKLE), 294–342 (WKDL…SKLP), and 380–428 (WKNL…SKLP).

As to expression, expressed primarily in the female gametophyte and in the floral abscission zone.

The protein localises to the mitochondrion. Its subcellular location is the plastid. It localises to the chloroplast. Binds single-stranded DNA. This is Protein OSB3, chloroplastic/mitochondrial (OSB3) from Arabidopsis thaliana (Mouse-ear cress).